We begin with the raw amino-acid sequence, 328 residues long: Protease HtpX homolog (328 aa).

The next 2 helical transmembrane spans lie at 6–26 and 28–48; these read TAML…LIGG and SGMM…YWNS. Residue histidine 130 coordinates Zn(2+). The active site involves glutamate 131. Histidine 134 provides a ligand contact to Zn(2+). 2 helical membrane-spanning segments follow: residues 145-165 and 172-192; these read ITAT…FFGG and PLGA…AMLV. Glutamate 201 contacts Zn(2+). Residues 279–328 are disordered; it reads QYGGGTGPSVGTPTRSGSTGPAMTANPERKSRSVPNTGRGGSQPPKGPWS. Low complexity predominate over residues 287–299; the sequence is SVGTPTRSGSTGP.

The protein belongs to the peptidase M48B family. Requires Zn(2+) as cofactor.

Its subcellular location is the cell inner membrane. This Rhizobium rhizogenes (strain K84 / ATCC BAA-868) (Agrobacterium radiobacter) protein is Protease HtpX homolog.